A 355-amino-acid polypeptide reads, in one-letter code: Peptide chain release factor 1 (355 aa).

At Q230 the chain carries N5-methylglutamine.

This sequence belongs to the prokaryotic/mitochondrial release factor family. Methylated by PrmC. Methylation increases the termination efficiency of RF1.

Its subcellular location is the cytoplasm. Its function is as follows. Peptide chain release factor 1 directs the termination of translation in response to the peptide chain termination codons UAG and UAA. This Geotalea uraniireducens (strain Rf4) (Geobacter uraniireducens) protein is Peptide chain release factor 1.